The sequence spans 158 residues: NAD(P)H-quinone oxidoreductase subunit J, chloroplastic (158 aa).

This sequence belongs to the complex I 30 kDa subunit family. In terms of assembly, NDH is composed of at least 16 different subunits, 5 of which are encoded in the nucleus.

Its subcellular location is the plastid. It is found in the chloroplast thylakoid membrane. The enzyme catalyses a plastoquinone + NADH + (n+1) H(+)(in) = a plastoquinol + NAD(+) + n H(+)(out). It carries out the reaction a plastoquinone + NADPH + (n+1) H(+)(in) = a plastoquinol + NADP(+) + n H(+)(out). In terms of biological role, NDH shuttles electrons from NAD(P)H:plastoquinone, via FMN and iron-sulfur (Fe-S) centers, to quinones in the photosynthetic chain and possibly in a chloroplast respiratory chain. The immediate electron acceptor for the enzyme in this species is believed to be plastoquinone. Couples the redox reaction to proton translocation, and thus conserves the redox energy in a proton gradient. The polypeptide is NAD(P)H-quinone oxidoreductase subunit J, chloroplastic (Psilotum nudum (Whisk fern)).